The sequence spans 37 residues: MKVRPSVKPICEKCKVIKRKGKVMVICENPKHKQRQG.

The protein belongs to the bacterial ribosomal protein bL36 family.

The sequence is that of Large ribosomal subunit protein bL36 from Staphylococcus aureus (strain Mu3 / ATCC 700698).